Reading from the N-terminus, the 155-residue chain is Small ribosomal subunit protein eS19B (155 aa).

It belongs to the eukaryotic ribosomal protein eS19 family.

This chain is Small ribosomal subunit protein eS19B (RpS19b), found in Drosophila melanogaster (Fruit fly).